A 43-amino-acid chain; its full sequence is Hemolysin H3C (43 aa).

Residue methionine 1 is modified to N-formylmethionine.

Belongs to the staphylococcal hemolytic protein family.

Its subcellular location is the secreted. Functionally, virulence factor. Causes hemolysis of erythrocytes from sheep (HD(50)=2.63 mM), rabbit (HD(50)=2.37 mM), guinea pig (HD(50)=1.98 mM), dog (HD(50)=1.02 mM) and human (HD(50)=2.07 mM). Acts synergistically with beta-hemolysins from S.aureus ATCC 25923. Cytotoxic towards human dermal fibroblasts. This Staphylococcus cohnii subsp. cohnii protein is Hemolysin H3C.